A 171-amino-acid chain; its full sequence is Probable deoxyuridine 5'-triphosphate nucleotidohydrolase (171 aa).

Belongs to the dCTP deaminase family. Archaeal dUTPase subfamily.

The enzyme catalyses dUTP + H2O = dUMP + diphosphate + H(+). Its pathway is pyrimidine metabolism; dUMP biosynthesis; dUMP from dCTP (dUTP route): step 2/2. This enzyme is involved in nucleotide metabolism: it produces dUMP, the immediate precursor of thymidine nucleotides and it decreases the intracellular concentration of dUTP so that uracil cannot be incorporated into DNA. The sequence is that of Probable deoxyuridine 5'-triphosphate nucleotidohydrolase from Methanosarcina barkeri (strain Fusaro / DSM 804).